The primary structure comprises 564 residues: Septation ring formation regulator EzrA (564 aa).

At 1-2 (ME) the chain is on the extracellular side. Residues 3 to 21 (FVIGLLALFLILFATGYLF) traverse the membrane as a helical segment. Topologically, residues 22–564 (RKNIYKEIDR…RLEADAKQPE (543 aa)) are cytoplasmic. Coiled-coil stretches lie at residues 99 to 159 (QKSK…AYSH), 243 to 281 (KGYKLDHIQVEKELENLLKELKRAEDALLDELDLEEAAA), and 310 to 498 (KVPE…VELV).

This sequence belongs to the EzrA family.

The protein localises to the cell membrane. In terms of biological role, negative regulator of FtsZ ring formation; modulates the frequency and position of FtsZ ring formation. Inhibits FtsZ ring formation at polar sites. Interacts either with FtsZ or with one of its binding partners to promote depolymerization. This Bacillus licheniformis (strain ATCC 14580 / DSM 13 / JCM 2505 / CCUG 7422 / NBRC 12200 / NCIMB 9375 / NCTC 10341 / NRRL NRS-1264 / Gibson 46) protein is Septation ring formation regulator EzrA.